Reading from the N-terminus, the 239-residue chain is 1-(5-phosphoribosyl)-5-[(5-phosphoribosylamino)methylideneamino] imidazole-4-carboxamide isomerase (239 aa).

Aspartate 8 acts as the Proton acceptor in catalysis. Aspartate 129 (proton donor) is an active-site residue.

The protein belongs to the HisA/HisF family.

It localises to the cytoplasm. It carries out the reaction 1-(5-phospho-beta-D-ribosyl)-5-[(5-phospho-beta-D-ribosylamino)methylideneamino]imidazole-4-carboxamide = 5-[(5-phospho-1-deoxy-D-ribulos-1-ylimino)methylamino]-1-(5-phospho-beta-D-ribosyl)imidazole-4-carboxamide. It functions in the pathway amino-acid biosynthesis; L-histidine biosynthesis; L-histidine from 5-phospho-alpha-D-ribose 1-diphosphate: step 4/9. This Bacillus thuringiensis subsp. konkukian (strain 97-27) protein is 1-(5-phosphoribosyl)-5-[(5-phosphoribosylamino)methylideneamino] imidazole-4-carboxamide isomerase.